The chain runs to 535 residues: GMP synthase [glutamine-hydrolyzing] (535 aa).

Residues 24 to 217 enclose the Glutamine amidotransferase type-1 domain; it reads KILIVDFGSQ…VRKVAGLTGD (194 aa). Cysteine 101 serves as the catalytic Nucleophile. Catalysis depends on residues histidine 191 and glutamate 193. In terms of domain architecture, GMPS ATP-PPase spans 218–410; it reads WTMRAFREEA…LGLPEIFVGR (193 aa). 245–251 contacts ATP; it reads SGGVDSS.

As to quaternary structure, homodimer.

It catalyses the reaction XMP + L-glutamine + ATP + H2O = GMP + L-glutamate + AMP + diphosphate + 2 H(+). It functions in the pathway purine metabolism; GMP biosynthesis; GMP from XMP (L-Gln route): step 1/1. Catalyzes the synthesis of GMP from XMP. The sequence is that of GMP synthase [glutamine-hydrolyzing] from Nitrobacter winogradskyi (strain ATCC 25391 / DSM 10237 / CIP 104748 / NCIMB 11846 / Nb-255).